The primary structure comprises 1157 residues: DNA-directed RNA polymerase subunit beta (1157 aa).

It belongs to the RNA polymerase beta chain family. The RNAP catalytic core consists of 2 alpha, 1 beta, 1 beta' and 1 omega subunit. When a sigma factor is associated with the core the holoenzyme is formed, which can initiate transcription.

The catalysed reaction is RNA(n) + a ribonucleoside 5'-triphosphate = RNA(n+1) + diphosphate. In terms of biological role, DNA-dependent RNA polymerase catalyzes the transcription of DNA into RNA using the four ribonucleoside triphosphates as substrates. This chain is DNA-directed RNA polymerase subunit beta, found in Tropheryma whipplei (strain Twist) (Whipple's bacillus).